The sequence spans 477 residues: Aspartyl/glutamyl-tRNA(Asn/Gln) amidotransferase subunit B (477 aa).

This sequence belongs to the GatB/GatE family. GatB subfamily. As to quaternary structure, heterotrimer of A, B and C subunits.

It catalyses the reaction L-glutamyl-tRNA(Gln) + L-glutamine + ATP + H2O = L-glutaminyl-tRNA(Gln) + L-glutamate + ADP + phosphate + H(+). The enzyme catalyses L-aspartyl-tRNA(Asn) + L-glutamine + ATP + H2O = L-asparaginyl-tRNA(Asn) + L-glutamate + ADP + phosphate + 2 H(+). Functionally, allows the formation of correctly charged Asn-tRNA(Asn) or Gln-tRNA(Gln) through the transamidation of misacylated Asp-tRNA(Asn) or Glu-tRNA(Gln) in organisms which lack either or both of asparaginyl-tRNA or glutaminyl-tRNA synthetases. The reaction takes place in the presence of glutamine and ATP through an activated phospho-Asp-tRNA(Asn) or phospho-Glu-tRNA(Gln). The chain is Aspartyl/glutamyl-tRNA(Asn/Gln) amidotransferase subunit B from Sulfurovum sp. (strain NBC37-1).